A 170-amino-acid polypeptide reads, in one-letter code: Adenine phosphoribosyltransferase (170 aa).

This sequence belongs to the purine/pyrimidine phosphoribosyltransferase family. In terms of assembly, homodimer.

It localises to the cytoplasm. It catalyses the reaction AMP + diphosphate = 5-phospho-alpha-D-ribose 1-diphosphate + adenine. Its pathway is purine metabolism; AMP biosynthesis via salvage pathway; AMP from adenine: step 1/1. Catalyzes a salvage reaction resulting in the formation of AMP, that is energically less costly than de novo synthesis. This is Adenine phosphoribosyltransferase from Geobacillus sp. (strain WCH70).